The chain runs to 74 residues: Small integral membrane protein 15 (74 aa).

A helical membrane pass occupies residues 20 to 40 (YGFLTTVILALTPLFLASAVL). Residues 42–74 (WKLAKMIEAREKEQKKKQKRQENIAKAKRLKKD) adopt a coiled-coil conformation. The span at 55–66 (QKKKQKRQENIA) shows a compositional bias: basic and acidic residues. A disordered region spans residues 55–74 (QKKKQKRQENIAKAKRLKKD).

It belongs to the SMIM15 family.

It is found in the membrane. This Homo sapiens (Human) protein is Small integral membrane protein 15 (SMIM15).